The chain runs to 247 residues: ATP synthase subunit a, chloroplastic (247 aa).

The next 5 membrane-spanning stretches (helical) occupy residues 38–58 (QVLI…TLAV), 95–115 (VPFI…GALL), 134–154 (INTT…AGLT), 199–219 (LVVV…VMFL), and 220–240 (GLFT…AYIG).

The protein belongs to the ATPase A chain family. F-type ATPases have 2 components, CF(1) - the catalytic core - and CF(0) - the membrane proton channel. CF(1) has five subunits: alpha(3), beta(3), gamma(1), delta(1), epsilon(1). CF(0) has four main subunits: a, b, b' and c.

The protein resides in the plastid. It localises to the chloroplast thylakoid membrane. In terms of biological role, key component of the proton channel; it plays a direct role in the translocation of protons across the membrane. This Jasminum nudiflorum (Winter jasmine) protein is ATP synthase subunit a, chloroplastic.